We begin with the raw amino-acid sequence, 59 residues long: Large ribosomal subunit protein uL30 (59 aa).

This sequence belongs to the universal ribosomal protein uL30 family. In terms of assembly, part of the 50S ribosomal subunit.

This is Large ribosomal subunit protein uL30 from Shewanella amazonensis (strain ATCC BAA-1098 / SB2B).